The sequence spans 1211 residues: DNA-directed RNA polymerase subunit beta' (1211 aa).

Residues C60, C62, C75, and C78 each coordinate Zn(2+). The Mg(2+) site is built by D450, D452, and D454. Positions 819, 893, 900, and 903 each coordinate Zn(2+).

The protein belongs to the RNA polymerase beta' chain family. In terms of assembly, the RNAP catalytic core consists of 2 alpha, 1 beta, 1 beta' and 1 omega subunit. When a sigma factor is associated with the core the holoenzyme is formed, which can initiate transcription. Requires Mg(2+) as cofactor. The cofactor is Zn(2+).

The catalysed reaction is RNA(n) + a ribonucleoside 5'-triphosphate = RNA(n+1) + diphosphate. DNA-dependent RNA polymerase catalyzes the transcription of DNA into RNA using the four ribonucleoside triphosphates as substrates. This chain is DNA-directed RNA polymerase subunit beta', found in Streptococcus equi subsp. zooepidemicus (strain H70).